A 99-amino-acid chain; its full sequence is HssA/B-like protein 41 (99 aa).

The interval 1 to 29 (MTLFSSISSISNPMTSSKSSISSFGSGTS) is disordered.

This sequence belongs to the hssA/B family.

This Dictyostelium discoideum (Social amoeba) protein is HssA/B-like protein 41 (hssl41).